We begin with the raw amino-acid sequence, 260 residues long: Receptor-recognizing protein gp38 (260 aa).

Short sequence motifs (GRM) lie at residues 116–123 (GRGGNGGS), 125–132 (AAGAAGGN), 152–160 (GGGGGGGGG), 162–173 (RGKLIFGGGGGR), 176–182 (GAGGSSS), 185–191 (SSGATAG), 194–204 (SAPGKGSVGEG), 210–216 (TGGAGGN), 219–224 (AAGGRC), and 228–240 (GNGTEYNGGAAGK). A disordered region spans residues 176-197 (GAGGSSSHMSSGATAGTISAPG). Residues 180–191 (SSSHMSSGATAG) are compositionally biased toward low complexity.

The protein belongs to the receptor-recognizing protein gp38 family.

The protein resides in the virion. Functionally, receptor binding protein (RBP) that is at the tip of the long tail fibers and serves as the phage recognition site for the attachment host receptor OmpA. This chain is Receptor-recognizing protein gp38 (38), found in Escherichia coli (Bacteriophage K3).